We begin with the raw amino-acid sequence, 328 residues long: Olfactory receptor 2AJ1 (328 aa).

Topologically, residues 1 to 25 (MGHQNHTFSSDFILLGLFSSSPTSV) are extracellular. N-linked (GlcNAc...) asparagine glycosylation occurs at Asn-5. A helical membrane pass occupies residues 26–49 (VFFLVLFVIFIMSVTENTLMILLI). Residues 50 to 57 (RSDSRLHT) are Cytoplasmic-facing. A helical membrane pass occupies residues 58 to 79 (PMYFLLSHLSLMDILHVSNIVP). The Extracellular portion of the chain corresponds to 80–100 (KMVTNFLSGSRTISFAGCGFQ). A disulfide bridge links Cys-97 with Cys-189. The chain crosses the membrane as a helical span at residues 101-120 (VFLSLTLLGGECLLLAAMSC). Residues 121 to 139 (DRYVAICHPLRYPILMKEY) lie on the Cytoplasmic side of the membrane. Residues 140-158 (ASALMAGGSWLIGVFNSTV) traverse the membrane as a helical segment. Residues 159 to 195 (HTAYALQFPFCGSRAIDHFFCEVPAMLKLSCADTTRY) are Extracellular-facing. A helical transmembrane segment spans residues 196-219 (ERGVCVSAVIFLLIPFSLISASYG). Residues 220–236 (QIILTVLQMKSSEARKK) lie on the Cytoplasmic side of the membrane. The chain crosses the membrane as a helical span at residues 237–259 (SFSTCSFHMIVVTMYYGPFIFTY). At 260–272 (MRPKSYHTPGQDK) the chain is on the extracellular side. Residues 273 to 292 (FLAIFYTILTPTLNPFIYSF) form a helical membrane-spanning segment. Residues 293 to 328 (RNKDVLAVMKNMLKSNFLHKKMNRKIPECVFCLFLC) lie on the Cytoplasmic side of the membrane.

It belongs to the G-protein coupled receptor 1 family.

The protein localises to the cell membrane. Functionally, odorant receptor. In Homo sapiens (Human), this protein is Olfactory receptor 2AJ1 (OR2AJ1).